We begin with the raw amino-acid sequence, 256 residues long: Major prion protein (256 aa).

Positions 1-24 (MVKSHIGSWILVLFVAMWSDVGLC) are cleaved as a signal peptide. The interval 25 to 233 (KKRPKPGGGW…ESQAYYQRGA (209 aa)) is interaction with GRB2, ERI3 and SYN1. The segment at 28 to 110 (PKPGGGWNTG…QWNKPSKPKT (83 aa)) is disordered. 5 tandem repeats follow at residues 54 to 62 (PQGGGGWGQ), 63 to 70 (PHGGGWGQ), 71 to 78 (PHGGGWGQ), 79 to 86 (PHGGGWGQ), and 87 to 95 (PHGGGGWGQ). Residues 54–95 (PQGGGGWGQPHGGGWGQPHGGGWGQPHGGGWGQPHGGGGWGQ) form a 5 X 8 AA tandem repeats of P-H-G-G-G-W-G-Q region. Over residues 55 to 97 (QGGGGWGQPHGGGWGQPHGGGWGQPHGGGWGQPHGGGGWGQGG) the composition is skewed to gly residues. Cu(2+) contacts are provided by His64, Gly65, Gly66, His72, Gly73, Gly74, His80, Gly81, Gly82, His88, Gly90, and Gly91. The cysteines at positions 182 and 217 are disulfide-linked. N-linked (GlcNAc...) asparagine glycosylation is found at Asn184 and Asn200. Ala233 carries GPI-anchor amidated alanine lipidation. Residues 234-256 (SVILFSSPPVILLISFLIFLIVG) constitute a propeptide, removed in mature form.

The protein belongs to the prion family. Monomer and homodimer. Has a tendency to aggregate into amyloid fibrils containing a cross-beta spine, formed by a steric zipper of superposed beta-strands. Soluble oligomers may represent an intermediate stage on the path to fibril formation. Copper binding may promote oligomerization. Interacts with GRB2, APP, ERI3/PRNPIP and SYN1. Mislocalized cytosolically exposed PrP interacts with MGRN1; this interaction alters MGRN1 subcellular location and causes lysosomal enlargement. Interacts with KIAA1191.

Its subcellular location is the cell membrane. It localises to the golgi apparatus. Its primary physiological function is unclear. Has cytoprotective activity against internal or environmental stresses. May play a role in neuronal development and synaptic plasticity. May be required for neuronal myelin sheath maintenance. May play a role in iron uptake and iron homeostasis. Soluble oligomers are toxic to cultured neuroblastoma cells and induce apoptosis (in vitro). Association with GPC1 (via its heparan sulfate chains) targets PRNP to lipid rafts. Also provides Cu(2+) or Zn(2+) for the ascorbate-mediated GPC1 deaminase degradation of its heparan sulfate side chains. This is Major prion protein (PRNP) from Ovis canadensis (Bighorn sheep).